We begin with the raw amino-acid sequence, 427 residues long: Ectonucleoside triphosphate diphosphohydrolase 5 (427 aa).

The first 24 residues, 1–24 (MATSWGAVFMLIIACVGSTVFYRE), serve as a signal peptide directing secretion. Glu171 (proton acceptor) is an active-site residue. N-linked (GlcNAc...) asparagine glycosylation is present at Asn231. 2 disulfides stabilise this stretch: Cys271–Cys302 and Cys362–Cys376.

This sequence belongs to the GDA1/CD39 NTPase family. As to quaternary structure, monomer; active form. Homodimer; disulfide-linked. Homodimers are enzymatically inactive. Ca(2+) serves as cofactor. Mg(2+) is required as a cofactor. Post-translationally, N-glycosylated; high-mannose type. In terms of tissue distribution, ubiquitous.

It localises to the endoplasmic reticulum. Its subcellular location is the secreted. It catalyses the reaction a ribonucleoside 5'-diphosphate + H2O = a ribonucleoside 5'-phosphate + phosphate + H(+). The catalysed reaction is GDP + H2O = GMP + phosphate + H(+). The enzyme catalyses UDP + H2O = UMP + phosphate + H(+). It carries out the reaction IDP + H2O = IMP + phosphate + H(+). It catalyses the reaction CDP + H2O = CMP + phosphate + H(+). The catalysed reaction is ADP + H2O = AMP + phosphate + H(+). It functions in the pathway protein modification; protein glycosylation. Hydrolyzes nucleoside diphosphates with a preference for GDP, IDP and UDP compared to ADP and CDP. In the lumen of the endoplasmic reticulum, hydrolyzes UDP that acts as an end-product feedback inhibitor of the UDP-Glc:glycoprotein glucosyltransferases. UMP can be transported back by an UDP-sugar antiporter to the cytosol where it is consumed to regenerate UDP-glucose. Therefore, it positively regulates protein reglucosylation by clearing UDP from the ER lumen and by promoting the regeneration of UDP-glucose. Protein reglucosylation is essential to proper glycoprotein folding and quality control in the ER. The polypeptide is Ectonucleoside triphosphate diphosphohydrolase 5 (Entpd5) (Mus musculus (Mouse)).